Reading from the N-terminus, the 714-residue chain is Calpain-1 catalytic subunit (714 aa).

The Calpain catalytic domain maps to Leu55 to Thr354. Residues Gln109 and Asp114 each coordinate Ca(2+). Residues Cys115, His272, and Asn296 contribute to the active site. Asp318 and Asp323 together coordinate Ca(2+). Position 354 is a phosphothreonine (Thr354). The tract at residues Pro355–Asp526 is domain III. Positions Gln527–Glu542 are linker. The interval Ile543–Phe713 is domain IV. EF-hand domains lie at Phe585–Arg618, Asn615–Lys650, and Val680–Ala714. Ca(2+) is bound by residues Asp598, Asp600, Asn602, Lys604, Glu609, Asp628, Asp630, Ser632, Ser634, and Glu639.

Belongs to the peptidase C2 family. As to quaternary structure, forms a heterodimer with a small (regulatory) subunit CAPNS1. Ca(2+) serves as cofactor. Undergoes calcium-induced successive autoproteolytic cleavages that generate a membrane-bound 78 kDa active form and an intracellular 75 kDa active form. Calpastatin reduces with high efficiency the transition from 78 kDa to 75 kDa calpain forms.

The protein resides in the cytoplasm. It localises to the cell membrane. The catalysed reaction is Broad endopeptidase specificity.. Activated by micromolar concentrations of calcium and inhibited by calpastatin. Functionally, calcium-regulated non-lysosomal thiol-protease which catalyzes limited proteolysis of substrates involved in cytoskeletal remodeling and signal transduction. Proteolytically cleaves CTBP1. Cleaves and activates caspase-7 (CASP7). This chain is Calpain-1 catalytic subunit, found in Sus scrofa (Pig).